The chain runs to 231 residues: NADH-quinone oxidoreductase subunit C (231 aa).

This sequence belongs to the complex I 30 kDa subunit family. As to quaternary structure, NDH-1 is composed of 14 different subunits. Subunits NuoB, C, D, E, F, and G constitute the peripheral sector of the complex.

It is found in the cell membrane. It carries out the reaction a quinone + NADH + 5 H(+)(in) = a quinol + NAD(+) + 4 H(+)(out). Functionally, NDH-1 shuttles electrons from NADH, via FMN and iron-sulfur (Fe-S) centers, to quinones in the respiratory chain. The immediate electron acceptor for the enzyme in this species is believed to be a menaquinone. Couples the redox reaction to proton translocation (for every two electrons transferred, four hydrogen ions are translocated across the cytoplasmic membrane), and thus conserves the redox energy in a proton gradient. The chain is NADH-quinone oxidoreductase subunit C from Mycobacterium sp. (strain JLS).